The following is a 389-amino-acid chain: MGTPAGAGTRPTGAGTVEGVGIPPGLQTDYETLLSRFQEMDSVRFEDFTELWRSMKFATIFCGKMRNLKKNMFTKEALALAWRYFLPPHTFQIRVGALYLLYGLYNTQLCQPKQKIRVALKDWDEVIRFQQDLMNAQHFDAAFVFRKLRLDRAFHFTAMPKLLSCRMKKKVQQTEVTQKFKDPNDRVMKLITSDVLEEMLNVHDHYQNMKHAISADKSMPDRALSLVKEDFFENIKNIVLEHQEWHKERKNPSLKPKLKDGEENGEGSSEEPERCERAVSLAKIKAKAFSAVVPVSKSRRHRQSKLDSSDSDSGSGQVQGRAAKRKRTREPAGPAGRKRSSRSKGNAPNERKEEKSLHLSMPIITEEEEEDMGGVRKAEFTAPKRKRKC.

Residues 1–15 (MGTPAGAGTRPTGAG) are compositionally biased toward low complexity. Disordered stretches follow at residues 1 to 22 (MGTP…GVGI), 245 to 276 (WHKE…ERCE), and 290 to 389 (SAVV…KRKC). Residues 20–187 (VGIPPGLQTD…QKFKDPNDRV (168 aa)) are SNAPC3-binding. The segment at 183-287 (PNDRVMKLIT…AVSLAKIKAK (105 aa)) is SNAPC4-binding. The segment covering 245–262 (WHKERKNPSLKPKLKDGE) has biased composition (basic and acidic residues). Phosphoserine occurs at positions 308 and 309.

Part of the SNAPc complex composed of 5 subunits: SNAPC1, SNAPC2, SNAPC3, SNAPC4 and SNAPC5. SNAPC1 interacts with SNAPC3, SNAPC4 and TBP.

It is found in the nucleus. Functionally, part of the SNAPc complex required for the transcription of both RNA polymerase II and III small-nuclear RNA genes. Binds to the proximal sequence element (PSE), a non-TATA-box basal promoter element common to these 2 types of genes. Recruits TBP and BRF2 to the U6 snRNA TATA box. In Mus musculus (Mouse), this protein is snRNA-activating protein complex subunit 1 (Snapc1).